The chain runs to 236 residues: Phycobilisome rod-core linker polypeptide cpcG (236 aa).

The PBS-linker domain occupies 11 to 193 (STQNQRVNGF…LDYNFLYKKN (183 aa)).

Belongs to the phycobilisome linker protein family. In terms of assembly, the phycobilisome is a hemidiscoidal structure that is composed of two distinct substructures: a core complex and a number of rods radiating from the core.

Its subcellular location is the plastid. The protein localises to the chloroplast. It localises to the chloroplast thylakoid membrane. Functionally, rod-core linker protein required for attachment of phycocyanin to allophycocyanin in cores of phycobilisomes. In terms of biological role, linker polypeptides determine the state of aggregation and the location of the disk-shaped phycobiliprotein units within the phycobilisome and modulate their spectroscopic properties in order to mediate a directed and optimal energy transfer. The protein is Phycobilisome rod-core linker polypeptide cpcG (cpcG) of Aglaothamnion neglectum (Red alga).